Here is an 832-residue protein sequence, read N- to C-terminus: Vacuolar transmembrane transporter penV (832 aa).

2 helical membrane-spanning segments follow: residues 39 to 59 (LYTQ…AFCI) and 117 to 137 (FFKF…AIIL). Positions 152-171 (WDNPPGNKTTSPIDGSEKEK) are disordered. N-linked (GlcNAc...) asparagine glycosylation is present at Asn158. The helical transmembrane segment at 178 to 198 (YLWIYVLFAYVFSGLAIYMLL) threads the bilayer. Asn214 carries an N-linked (GlcNAc...) asparagine glycan. Positions 291 to 322 (NDGNALPLTEQQPRDADDERSGLLSGHDNEHV) are disordered. Residues 302–321 (QPRDADDERSGLLSGHDNEH) show a composition bias toward basic and acidic residues. 9 helical membrane-spanning segments follow: residues 434–454 (FVIG…ASLL), 483–503 (GLPT…YEWL), 524–544 (FFFS…ASGF), 560–582 (TIAL…LLIL), 587–608 (LFPF…FLSA), 623–645 (FSYG…YSVF), 650–672 (LICL…QLLY), 687–707 (MICN…IGVL), and 713–733 (ITRS…SYWF). Positions 754–777 (PGGGDISPSPSSTLSPPSGLDRDS) are disordered. Over residues 759–771 (ISPSPSSTLSPPS) the composition is skewed to low complexity.

This sequence belongs to the CSC1 (TC 1.A.17) family.

Its subcellular location is the vacuole membrane. Its function is as follows. Vacuolar transmembrane transporter that participates in the first stage of the beta-lactam biosynthesis (the formation of the ACV tripeptide), probably taking part in the supply of amino acids from the vacuolar lumen to the vacuole-anchored ACV synthetase. This Penicillium rubens (strain ATCC 28089 / DSM 1075 / NRRL 1951 / Wisconsin 54-1255) (Penicillium chrysogenum) protein is Vacuolar transmembrane transporter penV.